Reading from the N-terminus, the 309-residue chain is Agglutinin (309 aa).

The residue at position 1 (Met-1) is an N-acetylmethionine. Jacalin-type lectin domains lie at 4–148 and 163–308; these read FLTV…YVKI and PRGP…HMEY.

The protein belongs to the jacalin lectin family.

Its function is as follows. D-mannose/D-glucose-binding lectin. Binds N-linked high-mannose-type glycans. Has a preference for smaller (Man(2)-Man(6)) high-mannose-type glycans to larger (Man(7)-Man(9)) ones. Recognizes both alpha1-6 extended and alpha1-3 extended monoantennary glycans. The addition of alpha1-2Man to the Man-alpha1-3Man-beta branch results in a significant loss of affinity, but beta1-2GlcNAc has some affinity. Has less affinity for biantennary glycans, and affinity is very weak for the biantennary complex-type N-glycans with bisecting GlcNAc. No affinity is observed for tri- and tetra-antennary glycans. Has mitogenic and hemagglutinating activities. The protein is Agglutinin of Castanea crenata (Japanese chestnut).